The sequence spans 266 residues: Energy-coupling factor transporter transmembrane protein EcfT 1 (266 aa).

5 consecutive transmembrane segments (helical) span residues 33–53 (IGILFLANNWWTYALMVLFTL), 73–93 (LIWLILFTVVMQILFASGGTI), 107–127 (LLNGVFVFLRFVLIIIMSTVI), 152–172 (VPVNDIALMISVALRFIPTLM), and 243–263 (HFGDLIAACVMILLTAGLVIL).

It belongs to the energy-coupling factor EcfT family. As to quaternary structure, forms a stable energy-coupling factor (ECF) transporter complex composed of 2 membrane-embedded substrate-binding proteins (S component), 2 ATP-binding proteins (A component) and 2 transmembrane proteins (T component). May be able to interact with more than 1 S component at a time.

The protein localises to the cell membrane. Transmembrane (T) component of an energy-coupling factor (ECF) ABC-transporter complex. Unlike classic ABC transporters this ECF transporter provides the energy necessary to transport a number of different substrates. This Listeria monocytogenes serotype 1/2a (strain 08-5578) protein is Energy-coupling factor transporter transmembrane protein EcfT 1.